An 852-amino-acid polypeptide reads, in one-letter code: DNA polymerase kappa (852 aa).

The region spanning 102-357 (IVHVDMDAFY…LPIRKVSGIG (256 aa)) is the UmuC domain. Aspartate 106 and aspartate 197 together coordinate Mg(2+). The interval 252–273 (FEDSPPDLQPQGSPFQLNSEEQ) is disordered. Over residues 261 to 273 (PQGSPFQLNSEEQ) the composition is skewed to polar residues. 2 consecutive UBZ4-type zinc fingers follow at residues 619–649 (TFICPVCFREQEGVSLEAFNEHVDECLDGPS) and 761–791 (ALVCPVCNLEQETSDLTLFNIHVDICLNKGI). Zn(2+)-binding residues include cysteine 622, cysteine 625, histidine 640, cysteine 644, cysteine 764, cysteine 767, histidine 782, and cysteine 786. Residues 798-852 (SEGNSVKQPKESSRSTDRLQKASGRTKRPGTKTKSSTLKKTKPRDPRHTLDGFFK) form a disordered region. Basic and acidic residues predominate over residues 805 to 817 (QPKESSRSTDRLQ). The span at 821–839 (GRTKRPGTKTKSSTLKKTK) shows a compositional bias: basic residues. The segment covering 840–852 (PRDPRHTLDGFFK) has biased composition (basic and acidic residues).

Belongs to the DNA polymerase type-Y family. As to quaternary structure, interacts with PCNA. Interacts with REV1. It depends on Mg(2+) as a cofactor. Mn(2+) is required as a cofactor. Detected at low levels in heart, brain, lung, liver, kidney and testis.

It is found in the nucleus. It carries out the reaction DNA(n) + a 2'-deoxyribonucleoside 5'-triphosphate = DNA(n+1) + diphosphate. Functionally, DNA polymerase specifically involved in DNA repair. Plays an important role in translesion synthesis, where the normal high-fidelity DNA polymerases cannot proceed and DNA synthesis stalls. Depending on the context, it inserts the correct base, but causes frequent base transitions, transversions and frameshifts. Lacks 3'-5' proofreading exonuclease activity. Forms a Schiff base with 5'-deoxyribose phosphate at abasic sites, but does not have lyase activity. The protein is DNA polymerase kappa (Polk) of Mus musculus (Mouse).